The following is a 300-amino-acid chain: Large ribosomal subunit protein bL9m (300 aa).

This sequence belongs to the bacterial ribosomal protein bL9 family. As to quaternary structure, component of the mitochondrial large ribosomal subunit (mt-LSU). Mature N.crassa 74S mitochondrial ribosomes consist of a small (37S) and a large (54S) subunit. The 37S small subunit contains a 16S ribosomal RNA (16S mt-rRNA) and 32 different proteins. The 54S large subunit contains a 23S rRNA (23S mt-rRNA) and 42 different proteins.

The protein resides in the mitochondrion. In terms of biological role, component of the mitochondrial ribosome (mitoribosome), a dedicated translation machinery responsible for the synthesis of mitochondrial genome-encoded proteins, including at least some of the essential transmembrane subunits of the mitochondrial respiratory chain. The mitoribosomes are attached to the mitochondrial inner membrane and translation products are cotranslationally integrated into the membrane. The protein is Large ribosomal subunit protein bL9m (mrpl50) of Neurospora crassa (strain ATCC 24698 / 74-OR23-1A / CBS 708.71 / DSM 1257 / FGSC 987).